Here is an 89-residue protein sequence, read N- to C-terminus: Phytosulfokines 1 (89 aa).

The signal sequence occupies residues Met1–Gly22. Residues Gln23 to Asp79 constitute a propeptide that is removed on maturation. Positions Gln33–Phe68 are disordered. N-linked (GlcNAc...) asparagine glycosylation is present at Asn42. Sulfotyrosine occurs at positions 80 and 82. The propeptide occupies Asp85–Pro89.

This sequence belongs to the phytosulfokine family. In terms of processing, sulfation is important for activity and for the binding to a putative membrane receptor. PSK-alpha is produced by endopeptidase digestion. PSK-beta is produced from PSK-alpha by exopeptidase digestion. As to expression, expressed throughout the seedling. More abundant in fragments containing shoot or root apexes where cells proliferate vigorously.

Its subcellular location is the secreted. In terms of biological role, promotes plant cell differentiation, organogenesis and somatic embryogenesis as well as cell proliferation. This Oryza sativa subsp. indica (Rice) protein is Phytosulfokines 1 (PSK1).